The sequence spans 54 residues: uncharacterized protein (54 aa).

The segment covering 1–28 (MDRKKDEIQRKYREQMREKKEREKEDGS) has biased composition (basic and acidic residues). The disordered stretch occupies residues 1-29 (MDRKKDEIQRKYREQMREKKEREKEDGSS). Residues 31–51 (TFEIVVVLAIIILMFFFNSVF) traverse the membrane as a helical segment.

It is found in the cell membrane. This is an uncharacterized protein from Bacillus subtilis (strain 168).